A 164-amino-acid polypeptide reads, in one-letter code: Transcriptional regulator MraZ (164 aa).

2 SpoVT-AbrB domains span residues 7-57 (THQN…TVGA) and 86-129 (AYPL…NPEA). The tract at residues 133–164 (RRQAARSRARTLATSRRPASAPAAGNTAGAAE) is disordered. Over residues 142–164 (RTLATSRRPASAPAAGNTAGAAE) the composition is skewed to low complexity.

Belongs to the MraZ family. As to quaternary structure, forms oligomers.

The protein resides in the cytoplasm. It localises to the nucleoid. The chain is Transcriptional regulator MraZ from Gluconobacter oxydans (strain 621H) (Gluconobacter suboxydans).